Here is a 110-residue protein sequence, read N- to C-terminus: T cell receptor alpha variable 35 (110 aa).

The signal sequence occupies residues 1–19 (MLLEHLLIILWMQLTWVSG). Residues 20–110 (QQLNQSPQSM…DVGIYFCAGQ (91 aa)) form the Ig-like domain. N-linked (GlcNAc...) asparagine glycosylation is found at Asn-40 and Asn-93. An intrachain disulfide couples Cys-41 to Cys-107.

Alpha-beta TR is a heterodimer composed of an alpha and beta chain; disulfide-linked. The alpha-beta TR is associated with the transmembrane signaling CD3 coreceptor proteins to form the TR-CD3 (TcR or TCR). The assembly of alpha-beta TR heterodimers with CD3 occurs in the endoplasmic reticulum where a single alpha-beta TR heterodimer associates with one CD3D-CD3E heterodimer, one CD3G-CD3E heterodimer and one CD247 homodimer forming a stable octameric structure. CD3D-CD3E and CD3G-CD3E heterodimers preferentially associate with TR alpha and TR beta chains, respectively. The association of the CD247 homodimer is the last step of TcR assembly in the endoplasmic reticulum and is required for transport to the cell surface.

It is found in the cell membrane. In terms of biological role, v region of the variable domain of T cell receptor (TR) alpha chain that participates in the antigen recognition. Alpha-beta T cell receptors are antigen specific receptors which are essential to the immune response and are present on the cell surface of T lymphocytes. Recognize peptide-major histocompatibility (MH) (pMH) complexes that are displayed by antigen presenting cells (APC), a prerequisite for efficient T cell adaptive immunity against pathogens. Binding of alpha-beta TR to pMH complex initiates TR-CD3 clustering on the cell surface and intracellular activation of LCK that phosphorylates the ITAM motifs of CD3G, CD3D, CD3E and CD247 enabling the recruitment of ZAP70. In turn ZAP70 phosphorylates LAT, which recruits numerous signaling molecules to form the LAT signalosome. The LAT signalosome propagates signal branching to three major signaling pathways, the calcium, the mitogen-activated protein kinase (MAPK) kinase and the nuclear factor NF-kappa-B (NF-kB) pathways, leading to the mobilization of transcription factors that are critical for gene expression and essential for T cell growth and differentiation. The T cell repertoire is generated in the thymus, by V-(D)-J rearrangement. This repertoire is then shaped by intrathymic selection events to generate a peripheral T cell pool of self-MH restricted, non-autoaggressive T cells. Post-thymic interaction of alpha-beta TR with the pMH complexes shapes TR structural and functional avidity. The sequence is that of T cell receptor alpha variable 35 from Homo sapiens (Human).